The primary structure comprises 483 residues: NADH-quinone oxidoreductase subunit N (483 aa).

13 helical membrane-spanning segments follow: residues 9 to 29 (LVLP…WGAF), 35 to 55 (PLFT…AVVG), 69 to 89 (AAAT…IVLG), 104 to 124 (AVLV…GDLI), 158 to 178 (FVLG…IYGF), 201 to 221 (VGLL…VSAA), 234 to 254 (APTS…MMMF), 272 to 292 (VLII…LAQT), 297 to 317 (LWAY…ATGG), 325 to 345 (LLFM…LQAL), 368 to 388 (IAVA…FSGF), 404 to 424 (VLLQ…AFYY), and 449 to 469 (AVGF…LIWL).

The protein belongs to the complex I subunit 2 family. NDH-1 is composed of 14 different subunits. Subunits NuoA, H, J, K, L, M, N constitute the membrane sector of the complex.

Its subcellular location is the cell inner membrane. The enzyme catalyses a quinone + NADH + 5 H(+)(in) = a quinol + NAD(+) + 4 H(+)(out). In terms of biological role, NDH-1 shuttles electrons from NADH, via FMN and iron-sulfur (Fe-S) centers, to quinones in the respiratory chain. The immediate electron acceptor for the enzyme in this species is believed to be ubiquinone. Couples the redox reaction to proton translocation (for every two electrons transferred, four hydrogen ions are translocated across the cytoplasmic membrane), and thus conserves the redox energy in a proton gradient. This Caulobacter sp. (strain K31) protein is NADH-quinone oxidoreductase subunit N.